We begin with the raw amino-acid sequence, 305 residues long: Tyrosine recombinase XerC (305 aa).

Residues 4–95 (TSIQELINKW…AVKNFYKFLE (92 aa)) form the Core-binding (CB) domain. Positions 116–298 (LLPKSLSEDD…SIKHLVSVYT (183 aa)) constitute a Tyr recombinase domain. Active-site residues include R159, K182, H250, R253, and H276. Y285 (O-(3'-phospho-DNA)-tyrosine intermediate) is an active-site residue.

It belongs to the 'phage' integrase family. XerC subfamily. In terms of assembly, forms a cyclic heterotetrameric complex composed of two molecules of XerC and two molecules of XerD.

Its subcellular location is the cytoplasm. Functionally, site-specific tyrosine recombinase, which acts by catalyzing the cutting and rejoining of the recombining DNA molecules. The XerC-XerD complex is essential to convert dimers of the bacterial chromosome into monomers to permit their segregation at cell division. It also contributes to the segregational stability of plasmids. This Rickettsia canadensis (strain McKiel) protein is Tyrosine recombinase XerC.